The chain runs to 688 residues: UvrABC system protein C (688 aa).

The region spanning L11–I90 is the GIY-YIG domain. Positions G200 to T235 constitute a UVR domain.

This sequence belongs to the UvrC family. As to quaternary structure, interacts with UvrB in an incision complex.

The protein localises to the cytoplasm. In terms of biological role, the UvrABC repair system catalyzes the recognition and processing of DNA lesions. UvrC both incises the 5' and 3' sides of the lesion. The N-terminal half is responsible for the 3' incision and the C-terminal half is responsible for the 5' incision. The chain is UvrABC system protein C from Nitratidesulfovibrio vulgaris (strain ATCC 29579 / DSM 644 / CCUG 34227 / NCIMB 8303 / VKM B-1760 / Hildenborough) (Desulfovibrio vulgaris).